We begin with the raw amino-acid sequence, 484 residues long: D-aminoacylase (484 aa).

Belongs to the metallo-dependent hydrolases superfamily. N-acyl-D-amino-acid deacylase family. Requires Zn(2+) as cofactor.

It localises to the cytoplasm. The enzyme catalyses an N-acyl-D-amino acid + H2O = a D-alpha-amino acid + a carboxylate. Its function is as follows. Has a wide specificity; hydrolyzes N-acyl derivative of neutral D-amino acids. This is D-aminoacylase (dan) from Alcaligenes xylosoxydans xylosoxydans (Achromobacter xylosoxidans).